The primary structure comprises 119 residues: Large ribosomal subunit protein bL20 (119 aa).

This sequence belongs to the bacterial ribosomal protein bL20 family.

Binds directly to 23S ribosomal RNA and is necessary for the in vitro assembly process of the 50S ribosomal subunit. It is not involved in the protein synthesizing functions of that subunit. In Levilactobacillus brevis (strain ATCC 367 / BCRC 12310 / CIP 105137 / JCM 1170 / LMG 11437 / NCIMB 947 / NCTC 947) (Lactobacillus brevis), this protein is Large ribosomal subunit protein bL20.